The primary structure comprises 593 residues: Copine-5 (593 aa).

The C2 1 domain maps to 2 to 134 (EQPEDMASLS…SSGSRLEKPL (133 aa)). Phosphoserine is present on Ser19. Positions 38, 44, 98, 100, 103, 108, and 110 each coordinate Ca(2+). A Phosphoserine modification is found at Ser103. Phosphoserine is present on Ser140. The C2 2 domain occupies 161-284 (KCGTIILSAE…ARGQSQFNIY (124 aa)). 5 residues coordinate Ca(2+): Asp192, Asp198, Asp254, Asp256, and Asp262. A VWFA domain is found at 328–554 (NFTVAIDFTA…DVLAEIPDQL (227 aa)). Positions 562–593 (GIRPRPPPAAPAQSPPQSPAHSPPGSPVHTHI) are disordered. Over residues 565–587 (PRPPPAAPAQSPPQSPAHSPPGS) the composition is skewed to pro residues.

This sequence belongs to the copine family. Requires Ca(2+) as cofactor. Expressed in the cerebra and cerebellum of newborn brain. Expressed in the eye, lung and muscles but weakly expressed in the adult brain (at protein level).

Its subcellular location is the perikaryon. It is found in the cell projection. Probable calcium-dependent phospholipid-binding protein that may play a role in calcium-mediated intracellular processes. Plays a role in dendrite formation by melanocytes. This is Copine-5 from Mus musculus (Mouse).